The primary structure comprises 190 residues: Putative resolvase R80 (190 aa).

The segment at residues 11 to 30 (SSVLGVHQRTLYQWDKKGWI) is a DNA-binding region (H-T-H motif). Positions 61–190 (LSICYVRVSS…RNGSRKYSNK (130 aa)) constitute a Resolvase/invertase-type recombinase catalytic domain. A coiled-coil region spans residues 67–92 (RVSSNSQKDDLERQIKFMKKKYPNHT). Ser-69 serves as the catalytic O-(5'-phospho-DNA)-serine intermediate.

The protein belongs to the site-specific recombinase resolvase family.

In terms of biological role, resolvase catalyzes the resolution (a site-specific recombination) of the cointegrated replicon to yield the final transposition products. This is Putative resolvase R80 from Acanthamoeba polyphaga mimivirus (APMV).